Consider the following 498-residue polypeptide: ATP synthase subunit beta, chloroplastic (498 aa).

172-179 (GGAGVGKT) provides a ligand contact to ATP.

Belongs to the ATPase alpha/beta chains family. F-type ATPases have 2 components, CF(1) - the catalytic core - and CF(0) - the membrane proton channel. CF(1) has five subunits: alpha(3), beta(3), gamma(1), delta(1), epsilon(1). CF(0) has four main subunits: a(1), b(1), b'(1) and c(9-12).

It is found in the plastid. Its subcellular location is the chloroplast thylakoid membrane. It carries out the reaction ATP + H2O + 4 H(+)(in) = ADP + phosphate + 5 H(+)(out). Its function is as follows. Produces ATP from ADP in the presence of a proton gradient across the membrane. The catalytic sites are hosted primarily by the beta subunits. The polypeptide is ATP synthase subunit beta, chloroplastic (Chamaerops humilis (Mediterranean fan palm)).